The primary structure comprises 412 residues: BSD domain-containing protein 1 (412 aa).

One can recognise a BSD domain in the interval Trp146–Glu198. Basic and acidic residues-rich tracts occupy residues Lys208 to Glu219 and His255 to Thr271. Disordered stretches follow at residues Lys208–Asp228 and His255–Phe383. Positions Ser272–Thr287 are enriched in low complexity. Positions Thr340–Val351 are enriched in basic and acidic residues. The span at Asn355 to Asp374 shows a compositional bias: polar residues.

The protein is BSD domain-containing protein 1 (bsdc1) of Xenopus tropicalis (Western clawed frog).